Here is a 560-residue protein sequence, read N- to C-terminus: NAD-dependent malic enzyme (560 aa).

Tyr100 (proton donor) is an active-site residue. Arg153 contributes to the NAD(+) binding site. Lys171 acts as the Proton acceptor in catalysis. Glu242, Asp243, and Asp266 together coordinate a divalent metal cation. 2 residues coordinate NAD(+): Asp266 and Asn413.

It belongs to the malic enzymes family. As to quaternary structure, homotetramer. Mg(2+) serves as cofactor. Mn(2+) is required as a cofactor.

It carries out the reaction (S)-malate + NAD(+) = pyruvate + CO2 + NADH. The enzyme catalyses oxaloacetate + H(+) = pyruvate + CO2. The sequence is that of NAD-dependent malic enzyme from Psychrobacter cryohalolentis (strain ATCC BAA-1226 / DSM 17306 / VKM B-2378 / K5).